A 150-amino-acid polypeptide reads, in one-letter code: MKCPFCGNSDSKVVDSRPDKGGSGIRRRRECEQCAKRFTTHERIEEMLPLVLKKDGRREPFERTKIISGIKKACEKRPISVEVIERLVDRLETRLQESSEKEISTTLIGEWIMKELHDLDEVAYVRFASVYRSFRDINEFMQELQELLKK.

The segment at methionine 1–arginine 26 is disordered. A zinc finger lies at cysteine 3–cysteine 34. The 91-residue stretch at proline 49–glutamate 139 folds into the ATP-cone domain.

This sequence belongs to the NrdR family. Zn(2+) serves as cofactor.

Functionally, negatively regulates transcription of bacterial ribonucleotide reductase nrd genes and operons by binding to NrdR-boxes. The chain is Transcriptional repressor NrdR from Pelobacter propionicus (strain DSM 2379 / NBRC 103807 / OttBd1).